A 1400-amino-acid polypeptide reads, in one-letter code: DNA-directed RNA polymerase subunit beta' (1400 aa).

Zn(2+) contacts are provided by C70, C72, C85, and C88. D460, D462, and D464 together coordinate Mg(2+). Zn(2+)-binding residues include C814, C887, C894, and C897.

Belongs to the RNA polymerase beta' chain family. As to quaternary structure, the RNAP catalytic core consists of 2 alpha, 1 beta, 1 beta' and 1 omega subunit. When a sigma factor is associated with the core the holoenzyme is formed, which can initiate transcription. Requires Mg(2+) as cofactor. The cofactor is Zn(2+).

The enzyme catalyses RNA(n) + a ribonucleoside 5'-triphosphate = RNA(n+1) + diphosphate. Functionally, DNA-dependent RNA polymerase catalyzes the transcription of DNA into RNA using the four ribonucleoside triphosphates as substrates. The protein is DNA-directed RNA polymerase subunit beta' of Marinomonas sp. (strain MWYL1).